The chain runs to 111 residues: UPF0145 protein BRADO6695 (111 aa).

It belongs to the UPF0145 family.

The protein is UPF0145 protein BRADO6695 of Bradyrhizobium sp. (strain ORS 278).